The sequence spans 123 residues: Large ribosomal subunit protein bL12 (123 aa).

Belongs to the bacterial ribosomal protein bL12 family. In terms of assembly, homodimer. Part of the ribosomal stalk of the 50S ribosomal subunit. Forms a multimeric L10(L12)X complex, where L10 forms an elongated spine to which 2 to 4 L12 dimers bind in a sequential fashion. Binds GTP-bound translation factors.

Functionally, forms part of the ribosomal stalk which helps the ribosome interact with GTP-bound translation factors. Is thus essential for accurate translation. The sequence is that of Large ribosomal subunit protein bL12 from Psychrobacter arcticus (strain DSM 17307 / VKM B-2377 / 273-4).